Consider the following 315-residue polypeptide: MATNSEFLIPARADLAAAREEWLKSLKTMRRLSDNTLIAYERDTRQFLQFLTGHLGEPPSLKEIGNLRIADLRSFLANRRNDGAGARTLGRGLAGVRSLLRHLEKRGLVNAAGASAMRAPRQPKSLPKPLTADDARRVVSADGQMAEEPWIAARNAAVLTLLYGCGLRISEALGLSGDALSDPSARSMTITGKGSKTRLVPLLPAVHKAVAQYRALCPFDLSAGQLLFRGAKGGPLHAAIIQREMQKLRAGLGLPDSATPHALRHSFATHLLGRGGDLRTIQELLGHASLSTTQVYTGVDTQRLLEVYDKTHPRA.

The region spanning 13–104 (ADLAAAREEW…GVRSLLRHLE (92 aa)) is the Core-binding (CB) domain. A Tyr recombinase domain is found at 125 to 309 (SLPKPLTADD…DTQRLLEVYD (185 aa)). Residues Arg-168, Lys-193, His-261, Arg-264, and His-287 contribute to the active site. The active-site O-(3'-phospho-DNA)-tyrosine intermediate is Tyr-296.

The protein belongs to the 'phage' integrase family. XerC subfamily. As to quaternary structure, forms a cyclic heterotetrameric complex composed of two molecules of XerC and two molecules of XerD.

The protein localises to the cytoplasm. In terms of biological role, site-specific tyrosine recombinase, which acts by catalyzing the cutting and rejoining of the recombining DNA molecules. The XerC-XerD complex is essential to convert dimers of the bacterial chromosome into monomers to permit their segregation at cell division. It also contributes to the segregational stability of plasmids. This is Tyrosine recombinase XerC from Brucella melitensis biotype 1 (strain ATCC 23456 / CCUG 17765 / NCTC 10094 / 16M).